The sequence spans 302 residues: Aspartate carbamoyltransferase catalytic subunit (302 aa).

The carbamoyl phosphate site is built by R55 and T56. K83 lines the L-aspartate pocket. Carbamoyl phosphate-binding residues include R105, H133, and Q136. L-aspartate is bound by residues R166 and R222. Residues G262 and P263 each coordinate carbamoyl phosphate.

It belongs to the aspartate/ornithine carbamoyltransferase superfamily. ATCase family. In terms of assembly, heterododecamer (2C3:3R2) of six catalytic PyrB chains organized as two trimers (C3), and six regulatory PyrI chains organized as three dimers (R2).

It carries out the reaction carbamoyl phosphate + L-aspartate = N-carbamoyl-L-aspartate + phosphate + H(+). It functions in the pathway pyrimidine metabolism; UMP biosynthesis via de novo pathway; (S)-dihydroorotate from bicarbonate: step 2/3. Catalyzes the condensation of carbamoyl phosphate and aspartate to form carbamoyl aspartate and inorganic phosphate, the committed step in the de novo pyrimidine nucleotide biosynthesis pathway. The protein is Aspartate carbamoyltransferase catalytic subunit of Solibacter usitatus (strain Ellin6076).